We begin with the raw amino-acid sequence, 134 residues long: Arsenate reductase 2 (134 aa).

Residues C11, C83, and C90 each act as nucleophile in the active site. 2 disulfide bridges follow: C11–C83 and C83–C90.

Belongs to the low molecular weight phosphotyrosine protein phosphatase family. Thioredoxin-coupled ArsC subfamily.

The protein localises to the cytoplasm. It carries out the reaction arsenate + [thioredoxin]-dithiol + H(+) = arsenite + [thioredoxin]-disulfide + H2O. In terms of biological role, catalyzes the reduction of arsenate [As(V)] to arsenite [As(III)]. The sequence is that of Arsenate reductase 2 from Bacillus cereus (strain ATCC 10987 / NRS 248).